A 225-amino-acid chain; its full sequence is Cytidylate kinase (225 aa).

ATP is bound at residue 11–19 (GPAGAGKGT). The span at 169 to 185 (MDRIKSRIEERDARDQS) shows a compositional bias: basic and acidic residues. The segment at 169 to 195 (MDRIKSRIEERDARDQSRATAPLAAAP) is disordered.

This sequence belongs to the cytidylate kinase family. Type 1 subfamily.

It localises to the cytoplasm. The catalysed reaction is CMP + ATP = CDP + ADP. It catalyses the reaction dCMP + ATP = dCDP + ADP. The chain is Cytidylate kinase from Magnetococcus marinus (strain ATCC BAA-1437 / JCM 17883 / MC-1).